A 105-amino-acid polypeptide reads, in one-letter code: Multidrug resistance protein EbrA (105 aa).

4 consecutive transmembrane segments (helical) span residues 2 to 22, 35 to 55, 57 to 77, and 84 to 104; these read LIGY…AAML, ALVV…LNHI, LSLS…VIGV, and LNAK…LLNW.

It belongs to the drug/metabolite transporter (DMT) superfamily. Small multidrug resistance (SMR) (TC 2.A.7.1) family. EbrA/EbrB subfamily. The efflux pump is composed of EbrA and EbrB.

Its subcellular location is the cell membrane. Its function is as follows. Part of a multidrug efflux pump. Confers resistance to cationic lipophilic dyes such as ethidium bromide, acriflavine, pyronine Y and safranin O. The efflux is probably coupled to an influx of protons. In Bacillus subtilis (strain 168), this protein is Multidrug resistance protein EbrA (ebrA).